Consider the following 488-residue polypeptide: Mannosylglycerate hydrolase MGH1 (488 aa).

Residues Y94, 98–101, Y146, Q167, and G227 contribute to the substrate site; that span reads WNWD. The active-site Proton donor is the D229. Residues R262 and 415–416 contribute to the substrate site; that span reads YW. Catalysis depends on E459, which acts as the Proton acceptor.

Belongs to the glycosyl hydrolase 63 family.

The enzyme catalyses (2R)-2-O-(alpha-D-mannosyl)-glycerate + H2O = D-mannose + (R)-glycerate. It carries out the reaction (2R)-2-O-(alpha-D-glucopyranosyl)-glycerate + H2O = (R)-glycerate + D-glucose. With respect to regulation, activity is not dependent on divalent cations, but it is enhanced by Mn(2+). Catalyzes the hydrolysis of alpha-D-mannosyl-glycerate (MG) to D-glycerate and D-mannose. Can also hydrolyze alpha-D-glucopyranosyl-glycerate (GG)with lower efficiency. The chain is Mannosylglycerate hydrolase MGH1 from Selaginella moellendorffii (Spikemoss).